A 904-amino-acid polypeptide reads, in one-letter code: Alanine--tRNA ligase (904 aa).

Residues H584, H588, C687, and H691 each coordinate Zn(2+).

The protein belongs to the class-II aminoacyl-tRNA synthetase family. Requires Zn(2+) as cofactor.

It is found in the cytoplasm. The enzyme catalyses tRNA(Ala) + L-alanine + ATP = L-alanyl-tRNA(Ala) + AMP + diphosphate. In terms of biological role, catalyzes the attachment of alanine to tRNA(Ala) in a two-step reaction: alanine is first activated by ATP to form Ala-AMP and then transferred to the acceptor end of tRNA(Ala). Also edits incorrectly charged Ser-tRNA(Ala) and Gly-tRNA(Ala) via its editing domain. The sequence is that of Alanine--tRNA ligase from Mycobacterium tuberculosis (strain ATCC 25177 / H37Ra).